The following is a 1050-amino-acid chain: Self-sufficient cytochrome P450 monooxygenase CYP505E3 (1050 aa).

Position 406 (Cys-406) interacts with heme. The span at 459-481 (RGQSATGLSQGSMSASGATSSVA) shows a compositional bias: polar residues. Residues 459–495 (RGQSATGLSQGSMSASGATSSVASPGPPAATGAQSNP) form a disordered region. The Flavodoxin-like domain maps to 501–641 (ISFFYGSNSG…DLELWEETNL (141 aa)). FMN contacts are provided by residues 507–511 (SNSGT) and 585–617 (VFGC…TRLT). The FAD-binding FR-type domain maps to 679-907 (RGLVEAKVTA…RPAKDAFHLP (229 aa)).

It in the N-terminal section; belongs to the cytochrome P450 family. Requires FAD as cofactor. It depends on FMN as a cofactor. Heme serves as cofactor.

It carries out the reaction 2 oxidized [cytochrome P450] + NADPH = 2 reduced [cytochrome P450] + NADP(+) + H(+). The enzyme catalyses an organic molecule + reduced [NADPH--hemoprotein reductase] + O2 = an alcohol + oxidized [NADPH--hemoprotein reductase] + H2O + H(+). It catalyses the reaction decane + reduced [NADPH--hemoprotein reductase] + O2 = 3-decanol + oxidized [NADPH--hemoprotein reductase] + H2O + H(+). The catalysed reaction is dodecane + reduced [NADPH--hemoprotein reductase] + O2 = 5-dodecanol + oxidized [NADPH--hemoprotein reductase] + H2O + H(+). It carries out the reaction tetradecane + reduced [NADPH--hemoprotein reductase] + O2 = 7-tetradecanol + oxidized [NADPH--hemoprotein reductase] + H2O + H(+). The enzyme catalyses hexadecane + reduced [NADPH--hemoprotein reductase] + O2 = 9-hexadecanol + oxidized [NADPH--hemoprotein reductase] + H2O + H(+). It catalyses the reaction dodecanoate + reduced [NADPH--hemoprotein reductase] + O2 = 5-hydroxydodecanoate + oxidized [NADPH--hemoprotein reductase] + H2O + H(+). The catalysed reaction is tetradecanoate + reduced [NADPH--hemoprotein reductase] + O2 = 7-hydroxytetradecanoate + oxidized [NADPH--hemoprotein reductase] + H2O + H(+). It carries out the reaction hexadecanoate + reduced [NADPH--hemoprotein reductase] + O2 = 9-hydroxyhexadecanoate + oxidized [NADPH--hemoprotein reductase] + H2O + H(+). The enzyme catalyses decan-1-ol + reduced [NADPH--hemoprotein reductase] + O2 = 1,3-decanediol + oxidized [NADPH--hemoprotein reductase] + H2O + H(+). It catalyses the reaction decan-1-ol + reduced [NADPH--hemoprotein reductase] + O2 = 1,7-decanediol + oxidized [NADPH--hemoprotein reductase] + H2O + H(+). The catalysed reaction is dodecan-1-ol + reduced [NADPH--hemoprotein reductase] + O2 = 1,5-dodecanediol + oxidized [NADPH--hemoprotein reductase] + H2O + H(+). It carries out the reaction dodecan-1-ol + reduced [NADPH--hemoprotein reductase] + O2 = 1,4-dodecanediol + oxidized [NADPH--hemoprotein reductase] + H2O + H(+). The enzyme catalyses dodecan-1-ol + reduced [NADPH--hemoprotein reductase] + O2 = 1,6-dodecanediol + oxidized [NADPH--hemoprotein reductase] + H2O + H(+). Self-sufficient cytochrome P450 monooxygenase that catalyzes the regioselective in-chain hydroxylation of alkanes, fatty alcohols, and fatty acids at the omega-7 position. Performs hydroxylation of C10-C16 n-alkanes and C12 and C14 fatty alcohols; and thereby enables the one step biocatalytic synthesis of rare alcohols such as 5-dodecanol and 7-tetradecanol. Converts 1-dodecanol into 1,5-dodecanediol as major product with very little sub-terminally hydroxylated products with the 1,4-dodecanediol and 1,6-dodecanediol more abundant. Does not use hexadecanediol nor decanoic acid as substrates. Converts dodecanoic acid to 5-hydroxydodecanoic acid which can be further converted into delta-dodecalactone by lactonization of the 5-hydroxy acid at low pH. Also gives sub-terminal hydroxylation of dodecanoic acid with 9-hydroxydodecanoic acid being the second most abundant product. The C14 and C16 fatty acids are double hydroxylated to yield dihydroxy acids hydroxylated at both the omega-7 position and a sub-terminal position (omega-1, omega-2, or omega-3). The chain is Self-sufficient cytochrome P450 monooxygenase CYP505E3 from Aspergillus terreus (strain NIH 2624 / FGSC A1156).